The sequence spans 469 residues: MNPNQKIITIGSVSLTIATICFLMQIAILVTTVTLHFKQYECDSPANNQVMPCEPISIERNITEIVYLTNTTIEKEICPKLVEYRNWSKPQCKITGFAPFSKDNSIRLSAGGDIWVTREPYVSCDPRKCYQFALGQGTTLENKHSNDTIHDRTPHRTLLMNELGVPFHLGTRQVCIAWSSSSCHDGKAWLHVCVTGYDKNATASFIYDGRLVDSIGSWSQNILRTQESECVCINGTCTVVMTDGSASGRADTKILFIEEGKIVHISPLSGSAQHVEECSCYPRYPGVRCICRDNWKGSNRPVVDINVKDYSIDSSYVCSGLVGDTPRKNDRSSSSYCRNPNNEKGIHGVKGWAFDDGNDVWMGRTISEDSRSGYETFKVIGGWSTPNSKLQINRQVIVDSANRSGYSGIFSVEGKSCINRCFYVELIRGREQETRVWWTSNSIVVFCGTSGTYGTGSWPDGADINLMPI.

Over 1–9 (MNPNQKIIT) the chain is Intravirion. Residues 10 to 30 (IGSVSLTIATICFLMQIAILV) traverse the membrane as a helical segment. The segment at 11-33 (GSVSLTIATICFLMQIAILVTTV) is involved in apical transport and lipid raft association. Residues 31–469 (TTVTLHFKQY…DGADINLMPI (439 aa)) lie on the Virion surface side of the membrane. The hypervariable stalk region stretch occupies residues 36 to 88 (HFKQYECDSPANNQVMPCEPISIERNITEIVYLTNTTIEKEICPKLVEYRNWS). 3 N-linked (GlcNAc...) asparagine; by host glycosylation sites follow: Asn61, Asn70, and Asn86. Residues 91-469 (QCKITGFAPF…DGADINLMPI (379 aa)) form a head of neuraminidase region. Cystine bridges form between Cys92-Cys417, Cys124-Cys129, Cys183-Cys230, Cys232-Cys237, Cys278-Cys291, Cys280-Cys289, Cys318-Cys337, and Cys421-Cys447. Residue Arg118 participates in substrate binding. The N-linked (GlcNAc...) asparagine; by host glycan is linked to Asn146. Asp151 (proton donor/acceptor) is an active-site residue. Arg152 contributes to the substrate binding site. Asn200 and Asn234 each carry an N-linked (GlcNAc...) asparagine; by host glycan. 276–277 (EE) lines the substrate pocket. Arg292 contacts substrate. Ca(2+)-binding residues include Asp293, Gly297, and Asp324. Arg371 contributes to the substrate binding site. Asn402 carries N-linked (GlcNAc...) asparagine; by host glycosylation. Tyr406 acts as the Nucleophile in catalysis.

It belongs to the glycosyl hydrolase 34 family. In terms of assembly, homotetramer. Requires Ca(2+) as cofactor. In terms of processing, N-glycosylated.

The protein localises to the virion membrane. The protein resides in the host apical cell membrane. The enzyme catalyses Hydrolysis of alpha-(2-&gt;3)-, alpha-(2-&gt;6)-, alpha-(2-&gt;8)- glycosidic linkages of terminal sialic acid residues in oligosaccharides, glycoproteins, glycolipids, colominic acid and synthetic substrates.. Its activity is regulated as follows. Inhibited by the neuraminidase inhibitors zanamivir (Relenza) and oseltamivir (Tamiflu). These drugs interfere with the release of progeny virus from infected cells and are effective against all influenza strains. Resistance to neuraminidase inhibitors is quite rare. Functionally, catalyzes the removal of terminal sialic acid residues from viral and cellular glycoconjugates. Cleaves off the terminal sialic acids on the glycosylated HA during virus budding to facilitate virus release. Additionally helps virus spread through the circulation by further removing sialic acids from the cell surface. These cleavages prevent self-aggregation and ensure the efficient spread of the progeny virus from cell to cell. Otherwise, infection would be limited to one round of replication. Described as a receptor-destroying enzyme because it cleaves a terminal sialic acid from the cellular receptors. May facilitate viral invasion of the upper airways by cleaving the sialic acid moieties on the mucin of the airway epithelial cells. Likely to plays a role in the budding process through its association with lipid rafts during intracellular transport. May additionally display a raft-association independent effect on budding. Plays a role in the determination of host range restriction on replication and virulence. Sialidase activity in late endosome/lysosome traffic seems to enhance virus replication. The polypeptide is Neuraminidase (Aves (whales)).